Consider the following 529-residue polypeptide: Ectonucleoside triphosphate diphosphohydrolase 3 (529 aa).

Topologically, residues 1–22 (MFTVLTRQPCEQAGLKALYRTP) are cytoplasmic. A helical transmembrane segment spans residues 23–43 (TIIALVVLLVSIVVLVSITVI). At 44 to 485 (QIHKQEVLPP…PLIRLPIEPP (442 aa)) the chain is on the extracellular side. N81 carries an N-linked (GlcNAc...) asparagine glycan. The cysteines at positions 92 and 116 are disulfide-linked. N149 carries N-linked (GlcNAc...) asparagine glycosylation. E182 (proton acceptor) is an active-site residue. 222 to 226 (GASTQ) contacts ATP. N238 carries N-linked (GlcNAc...) asparagine glycosylation. 3 disulfide bridges follow: C261–C308, C289–C334, and C347–C353. N-linked (GlcNAc...) asparagine glycosylation is found at N381, N392, N402, and N454. The cysteines at positions 399 and 422 are disulfide-linked. A helical membrane pass occupies residues 486–506 (VFVGTLAFFTAAALLCLAFLA). Over 507 to 529 (YLCSATRRKRHSEHAFDHAVDSD) the chain is Cytoplasmic.

It belongs to the GDA1/CD39 NTPase family. Requires Ca(2+) as cofactor. Mg(2+) serves as cofactor. In terms of tissue distribution, expressed in adult brain, pancreas, spleen and prostate. Moderate or low expression is seen in most tissues. Not expressed in liver and peripheral blood leukocytes.

The protein localises to the cell membrane. The catalysed reaction is a ribonucleoside 5'-triphosphate + 2 H2O = a ribonucleoside 5'-phosphate + 2 phosphate + 2 H(+). In terms of biological role, has a threefold preference for the hydrolysis of ATP over ADP. This is Ectonucleoside triphosphate diphosphohydrolase 3 (ENTPD3) from Homo sapiens (Human).